We begin with the raw amino-acid sequence, 121 residues long: Natriuretic peptides B (121 aa).

An N-terminal signal peptide occupies residues 1–26 (MDLLKVLSQMILFLLFLYLSPLGGHS). The interval 61-89 (LKDQGLTKEHPKRVLRSQGSTLRVQQRPQ) is disordered. Residues 77-89 (SQGSTLRVQQRPQ) show a composition bias toward polar residues. A disulfide bond links Cys99 and Cys115.

This sequence belongs to the natriuretic peptide family. In terms of processing, the precursor molecule is proteolytically cleaved by the endoprotease Furin to produce brain natriuretic peptide 45. May undergo further proteolytic cleavage by various proteases such as DPP4, MME and possibly FAP, to give rise to a variety of shorter peptides. May be cleaved at Ser-91 by the prolyl endopeptidase FAP (seprase) activity (in vitro). May be degraded by IDE. During IDE degradation, the resulting products initially increase the activation of NPR1 and can also stimulate NPR2 to produce cGMP before the fragments are completely degraded and inactivated by IDE (in vitro). In terms of tissue distribution, expressed abundantly in the ventricle, and in a lesser extent in the atrium (at protein level).

Its subcellular location is the secreted. Cardiac hormone that plays a key role in mediating cardio-renal homeostasis. May also function as a paracrine antifibrotic factor in the heart. Acts by specifically binding and stimulating NPR1 to produce cGMP, which in turn activates effector proteins that drive various biological responses. Likely involved in regulating the extracellular fluid volume and maintaining the fluid-electrolyte balance through natriuresis, diuresis, kaluresis and chloruresis. The protein is Natriuretic peptides B (Nppb) of Mus musculus (Mouse).